We begin with the raw amino-acid sequence, 97 residues long: Phosphoribosyl-ATP pyrophosphatase (97 aa).

This sequence belongs to the PRA-PH family.

It localises to the cytoplasm. It carries out the reaction 1-(5-phospho-beta-D-ribosyl)-ATP + H2O = 1-(5-phospho-beta-D-ribosyl)-5'-AMP + diphosphate + H(+). It functions in the pathway amino-acid biosynthesis; L-histidine biosynthesis; L-histidine from 5-phospho-alpha-D-ribose 1-diphosphate: step 2/9. The polypeptide is Phosphoribosyl-ATP pyrophosphatase (Methanoculleus marisnigri (strain ATCC 35101 / DSM 1498 / JR1)).